The sequence spans 399 residues: MSQYRTFTAQDAVEYARTFGGIDDPSTLVEAQEVGDGNLNLVFKIFDTTGVSRIVVKQALPYVRCVGESWPLTLDRARLEAQTLVAHYQHCPQHTVKIHHFDPELAVMVMEDLSDHNIWRGELIKGAWYPQAARQLGEYLAQTLFHTSDFYLHPHDKKAQVATFINPEMCEITEDLFFNDPYQIHERNSYPAEIEGDVAALRSDAQLKLAVAALKHRFFSHAEALLHGDIHSGSIFVADGRLKAIDAEFGYFGPIGFDVGTAIGNLLLNFCGLPGHLGIRDAAAAREQRLTDIQELWNTFAERFQVLATEKTRDAALRAPGYASEFLKKVWADAIGFCGTELIRRSVGLSHVADIDTIQDAEMRHECLRHAITLGKALIVIADRIESVEALIARVRQYS.

ATP-binding positions include asparagine 40, lysine 57, and 111–113 (EDL). Aspartate 229 is a binding site for substrate. 246–248 (DAE) contributes to the ATP binding site. Residue arginine 344 participates in substrate binding.

This sequence belongs to the methylthioribose kinase family. As to quaternary structure, homodimer.

The enzyme catalyses 5-(methylsulfanyl)-D-ribose + ATP = 5-(methylsulfanyl)-alpha-D-ribose 1-phosphate + ADP + H(+). It functions in the pathway amino-acid biosynthesis; L-methionine biosynthesis via salvage pathway; S-methyl-5-thio-alpha-D-ribose 1-phosphate from S-methyl-5'-thioadenosine (hydrolase route): step 2/2. Functionally, catalyzes the phosphorylation of methylthioribose into methylthioribose-1-phosphate. This chain is Methylthioribose kinase, found in Citrobacter koseri (strain ATCC BAA-895 / CDC 4225-83 / SGSC4696).